The sequence spans 291 residues: Ribosomal RNA small subunit methyltransferase A (291 aa).

6 residues coordinate S-adenosyl-L-methionine: His37, Leu39, Gly64, Glu85, Asp110, and Asn131.

The protein belongs to the class I-like SAM-binding methyltransferase superfamily. rRNA adenine N(6)-methyltransferase family. RsmA subfamily.

It is found in the cytoplasm. It carries out the reaction adenosine(1518)/adenosine(1519) in 16S rRNA + 4 S-adenosyl-L-methionine = N(6)-dimethyladenosine(1518)/N(6)-dimethyladenosine(1519) in 16S rRNA + 4 S-adenosyl-L-homocysteine + 4 H(+). In terms of biological role, specifically dimethylates two adjacent adenosines (A1518 and A1519) in the loop of a conserved hairpin near the 3'-end of 16S rRNA in the 30S particle. May play a critical role in biogenesis of 30S subunits. This is Ribosomal RNA small subunit methyltransferase A from Dehalococcoides mccartyi (strain ATCC BAA-2266 / KCTC 15142 / 195) (Dehalococcoides ethenogenes (strain 195)).